We begin with the raw amino-acid sequence, 166 residues long: Ribosome maturation factor RimM (166 aa).

A PRC barrel domain is found at 94-165 (EGEYYLGKLI…TIELKVLDLL (72 aa)).

The protein belongs to the RimM family. In terms of assembly, binds ribosomal protein uS19.

The protein resides in the cytoplasm. An accessory protein needed during the final step in the assembly of 30S ribosomal subunit, possibly for assembly of the head region. Essential for efficient processing of 16S rRNA. May be needed both before and after RbfA during the maturation of 16S rRNA. It has affinity for free ribosomal 30S subunits but not for 70S ribosomes. The sequence is that of Ribosome maturation factor RimM from Borreliella afzelii (strain PKo) (Borrelia afzelii).